A 138-amino-acid chain; its full sequence is Large ribosomal subunit protein uL16m (138 aa).

The protein belongs to the universal ribosomal protein uL16 family.

The protein resides in the mitochondrion. This is Large ribosomal subunit protein uL16m (RPL16) from Chondrus crispus (Carrageen Irish moss).